A 467-amino-acid chain; its full sequence is Gamma-aminobutyric acid receptor subunit gamma-3 (467 aa).

The N-terminal stretch at 1–17 is a signal peptide; that stretch reads MAPKLLLLLCLFSGLHA. The Extracellular portion of the chain corresponds to 18 to 256; the sequence is RSRKVEEDEY…FELSRRMGYF (239 aa). N-linked (GlcNAc...) asparagine glycosylation is present at N110. Cysteines 171 and 185 form a disulfide. N228 is a glycosylation site (N-linked (GlcNAc...) asparagine). Residues 257 to 277 traverse the membrane as a helical segment; sequence TIQTYIPCILTVVLSWVSFWI. At 278 to 283 the chain is on the cytoplasmic side; the sequence is KKDATP. A helical membrane pass occupies residues 284–303; the sequence is ARTALGITTVLTMTTLSTIA. At 304 to 311 the chain is on the extracellular side; sequence RKSLPRVS. Residues 312–332 traverse the membrane as a helical segment; that stretch reads YVTAMDLFVTVCFLFVFAALM. Over 333–446 the chain is Cytoplasmic; the sequence is EYATLNYYSS…DILELDSYSR (114 aa). A helical membrane pass occupies residues 447-467; it reads VFFPTSFLLFNLVYWVGYLYL.

It belongs to the ligand-gated ion channel (TC 1.A.9) family. Gamma-aminobutyric acid receptor (TC 1.A.9.5) subfamily. GABRG3 sub-subfamily. Heteropentamer, formed by a combination of alpha (GABRA1-6), beta (GABRB1-3), gamma (GABRG1-3), delta (GABRD), epsilon (GABRE), rho (GABRR1-3), pi (GABRP) and theta (GABRQ) chains, each subunit exhibiting distinct physiological and pharmacological properties. Post-translationally, may be palmitoylated. Expressed in brain.

It localises to the postsynaptic cell membrane. It is found in the cell membrane. It carries out the reaction chloride(in) = chloride(out). In terms of biological role, gamma subunit of the heteropentameric ligand-gated chloride channel gated by gamma-aminobutyric acid (GABA), a major inhibitory neurotransmitter in the brain. GABA-gated chloride channels, also named GABA(A) receptors (GABAAR), consist of five subunits arranged around a central pore and contain GABA active binding site(s) located at the alpha and beta subunit interface(s). When activated by GABA, GABAARs selectively allow the flow of chloride across the cell membrane down their electrochemical gradient. This chain is Gamma-aminobutyric acid receptor subunit gamma-3, found in Homo sapiens (Human).